The primary structure comprises 131 residues: Profilin-9 (131 aa).

Cys-13 and Cys-115 are joined by a disulfide. Positions 81-97 (AVTRGKKGAGGITIKKT) match the Involved in PIP2 interaction motif. Residue Thr-111 is modified to Phosphothreonine.

Belongs to the profilin family. In terms of assembly, occurs in many kinds of cells as a complex with monomeric actin in a 1:1 ratio. Post-translationally, phosphorylated by MAP kinases.

The protein resides in the cytoplasm. Its subcellular location is the cytoskeleton. Its function is as follows. Binds to actin and affects the structure of the cytoskeleton. At high concentrations, profilin prevents the polymerization of actin, whereas it enhances it at low concentrations. The protein is Profilin-9 of Phleum pratense (Common timothy).